The sequence spans 288 residues: Transposase for insertion sequence element IS1106 (288 aa).

It belongs to the transposase 11 family.

Functionally, involved in the transposition of the insertion sequence. The polypeptide is Transposase for insertion sequence element IS1106 (Neisseria meningitidis serogroup B).